The chain runs to 475 residues: Aspartyl/glutamyl-tRNA(Asn/Gln) amidotransferase subunit B (475 aa).

It belongs to the GatB/GatE family. GatB subfamily. In terms of assembly, heterotrimer of A, B and C subunits.

The catalysed reaction is L-glutamyl-tRNA(Gln) + L-glutamine + ATP + H2O = L-glutaminyl-tRNA(Gln) + L-glutamate + ADP + phosphate + H(+). It catalyses the reaction L-aspartyl-tRNA(Asn) + L-glutamine + ATP + H2O = L-asparaginyl-tRNA(Asn) + L-glutamate + ADP + phosphate + 2 H(+). Its function is as follows. Allows the formation of correctly charged Asn-tRNA(Asn) or Gln-tRNA(Gln) through the transamidation of misacylated Asp-tRNA(Asn) or Glu-tRNA(Gln) in organisms which lack either or both of asparaginyl-tRNA or glutaminyl-tRNA synthetases. The reaction takes place in the presence of glutamine and ATP through an activated phospho-Asp-tRNA(Asn) or phospho-Glu-tRNA(Gln). The chain is Aspartyl/glutamyl-tRNA(Asn/Gln) amidotransferase subunit B from Bacillus thuringiensis subsp. konkukian (strain 97-27).